The sequence spans 153 residues: Deoxyuridine 5'-triphosphate nucleotidohydrolase (153 aa).

Residues 71–73 (RSG), Asn84, 88–90 (LID), and Met98 contribute to the substrate site.

It belongs to the dUTPase family. The cofactor is Mg(2+).

It carries out the reaction dUTP + H2O = dUMP + diphosphate + H(+). The protein operates within pyrimidine metabolism; dUMP biosynthesis; dUMP from dCTP (dUTP route): step 2/2. Its function is as follows. This enzyme is involved in nucleotide metabolism: it produces dUMP, the immediate precursor of thymidine nucleotides and it decreases the intracellular concentration of dUTP so that uracil cannot be incorporated into DNA. This is Deoxyuridine 5'-triphosphate nucleotidohydrolase from Hydrogenovibrio crunogenus (strain DSM 25203 / XCL-2) (Thiomicrospira crunogena).